The sequence spans 125 residues: Small ribosomal subunit protein uS12 (125 aa).

3-methylthioaspartic acid is present on D89. Positions 100–125 (GSLDTQGVQNRKQARSKYGAKRPKKA) are disordered. Over residues 111 to 125 (KQARSKYGAKRPKKA) the composition is skewed to basic residues.

Belongs to the universal ribosomal protein uS12 family. Part of the 30S ribosomal subunit. Contacts proteins S8 and S17. May interact with IF1 in the 30S initiation complex.

With S4 and S5 plays an important role in translational accuracy. In terms of biological role, interacts with and stabilizes bases of the 16S rRNA that are involved in tRNA selection in the A site and with the mRNA backbone. Located at the interface of the 30S and 50S subunits, it traverses the body of the 30S subunit contacting proteins on the other side and probably holding the rRNA structure together. The combined cluster of proteins S8, S12 and S17 appears to hold together the shoulder and platform of the 30S subunit. The chain is Small ribosomal subunit protein uS12 from Thioalkalivibrio sulfidiphilus (strain HL-EbGR7).